The sequence spans 192 residues: ER protein translocation subcomplex subunit sec67 (192 aa).

As to quaternary structure, component of the heterotetrameric Sec62/63complex composed of sec62, sec63, sec66 and sec72. The Sec62/63 complex associates with the Sec61 complex to form the Sec complex.

It localises to the cytoplasm. Its subcellular location is the nucleus. Its function is as follows. Acts as a non-essential component of the Sec62/63 complex which is involved in SRP-independent post-translational translocation across the endoplasmic reticulum (ER) and functions together with the Sec61 complex and bip1 in a channel-forming translocon complex. A cycle of assembly and disassembly of Sec62/63 complex from sec61 may govern the activity of the translocon. sec72 may be involved in signal peptide recognition for a defined subset of leader peptides, or may increase the efficiency of unusual or 'difficult' secretory precursors to the translocation pore, it may be that this protein binds charged leader peptides to the membrane until they engage the translocation apparatus. This chain is ER protein translocation subcomplex subunit sec67 (sec67), found in Schizosaccharomyces pombe (strain 972 / ATCC 24843) (Fission yeast).